Here is a 438-residue protein sequence, read N- to C-terminus: Succinyl-CoA:glutarate CoA-transferase (438 aa).

A mitochondrion-targeting transit peptide spans 1–31 (MLATLARVAALRRTCLFSGRGGGRGLWTGRP). The active-site Nucleophile is Asp-205. At Lys-394 the chain carries N6-acetyllysine.

The protein belongs to the CoA-transferase III family. As to expression, highly expressed in kidney. Intermediate expression in liver, skeletal muscle and pancreas. Little to no expression detected in other tissues examined.

It localises to the mitochondrion. It catalyses the reaction glutarate + succinyl-CoA = glutaryl-CoA + succinate. It carries out the reaction 3-hydroxy-3-methylglutarate + succinyl-CoA = (3S)-3-hydroxy-3-methylglutaryl-CoA + succinate. The catalysed reaction is 3-hydroxy-3-methylglutarate + glutaryl-CoA = (3S)-3-hydroxy-3-methylglutaryl-CoA + glutarate. The enzyme catalyses hexanedioate + glutaryl-CoA = hexanedioyl-CoA + glutarate. It catalyses the reaction itaconate + glutaryl-CoA = itaconyl-CoA + glutarate. It carries out the reaction itaconate + succinyl-CoA = itaconyl-CoA + succinate. Inhibited by valsartan and losartan carboxylate. Coenzyme A (CoA) transferase that reversibly catalyzes the transfer of a CoA moiety from a dicarboxyl-CoA to a dicarboxylate in a metabolite recycling process. Displays preference for succinyl-CoA and glutarate-CoA as dicarboxyl-CoA donors and glutarate, succinate, adipate/hexanedioate, itaconate and 3-hydroxy-3-methylglutarate as dicarboxylate acceptors. Acts on intermediates or end products of lysine and tryptophan degradation pathway, in particular catalyzes succinyl-CoA-dependent reesterification of free glutarate into glutaryl-CoA to prevent renal excretion of glutarate. Upon inflammation, may convert macrophage-derived itaconate to itaconyl-CoA in erythroid precursors where it negatively regulates the TCA cycle and heme synthesis to limit erythroid differentiation in the context of stress erythropoiesis. In Homo sapiens (Human), this protein is Succinyl-CoA:glutarate CoA-transferase.